We begin with the raw amino-acid sequence, 196 residues long: Protein GrpE (196 aa).

The tract at residues 1 to 40 (MSSKEQKTPEGQAPEEIIMDQHEEVEAVEPNDSAEQVDPR) is disordered.

It belongs to the GrpE family. In terms of assembly, homodimer.

It localises to the cytoplasm. Functionally, participates actively in the response to hyperosmotic and heat shock by preventing the aggregation of stress-denatured proteins, in association with DnaK and GrpE. It is the nucleotide exchange factor for DnaK and may function as a thermosensor. Unfolded proteins bind initially to DnaJ; upon interaction with the DnaJ-bound protein, DnaK hydrolyzes its bound ATP, resulting in the formation of a stable complex. GrpE releases ADP from DnaK; ATP binding to DnaK triggers the release of the substrate protein, thus completing the reaction cycle. Several rounds of ATP-dependent interactions between DnaJ, DnaK and GrpE are required for fully efficient folding. The polypeptide is Protein GrpE (Salmonella enteritidis PT4 (strain P125109)).